A 643-amino-acid polypeptide reads, in one-letter code: Aspartic protease 3 (643 aa).

The N-terminal stretch at 1–31 is a signal peptide; it reads MEGRTTAGRATPAGFWLFSCCLASVLWSANA. The segment covering 87 to 99 has biased composition (low complexity); that stretch reads APEVSGAAGASAS. The disordered stretch occupies residues 87-116; sequence APEVSGAAGASASKTSEKPIRPYHTGPSSR. Positions 281-600 constitute a Peptidase A1 domain; that stretch reads YVGVIGIGTP…GTRPSLVGIA (320 aa). Residues Asp299 and Asp490 contribute to the active site.

This sequence belongs to the peptidase A1 family.

Its subcellular location is the endomembrane system. Inhibited by 49c, a hydroxyethylamine scaffold-based compound. Functionally, required for the processing-mediated maturation of a subset of microneme proteins, such as MIC6, and rhoptry proteins, such as ROP1. By regulating microneme and rhoptry processing, plays an essential role in the lysis of the host cell membrane during egress and in rhoptry content discharge, which is required for invasion of host cells. This is Aspartic protease 3 from Toxoplasma gondii.